We begin with the raw amino-acid sequence, 470 residues long: Putative gustatory receptor 28b (470 aa).

At 1–76 (MDIEMAKEPV…KTGKKAIKKT (76 aa)) the chain is on the cytoplasmic side. The helical transmembrane segment at 77–97 (IFGYINGIMHIAMFVFAYSLT) threads the bilayer. Residues 98–119 (IYNNCESVASYFFRSRITYFGD) are Extracellular-facing. The chain crosses the membrane as a helical span at residues 120-140 (LMQIVSGFIGVTVIYLTAFVP). Over 141-175 (NHRLERCLQKFHTMDVQLQTVGVKIMYSKVLRFSY) the chain is Cytoplasmic. Residues 176 to 196 (MVLISMFLVNVLFTGGTFSVL) form a helical membrane-spanning segment. Residues 197-204 (YSSEVAPT) lie on the Extracellular side of the membrane. The helical transmembrane segment at 205 to 225 (MALHFTFLIQHTVIAIAIALF) threads the bilayer. The Cytoplasmic segment spans residues 226–309 (SCFTYLVEMR…ATANKYFTYQ (84 aa)). Residues 310–330 (LLTIISIAFLIIVFDAYYVLE) traverse the membrane as a helical segment. Residues 331–346 (TLLGKSKRESKFKTVE) lie on the Extracellular side of the membrane. A helical membrane pass occupies residues 347–367 (FVTFFSCQMILYLIAIISIVE). Topologically, residues 368–423 (GSNRAIKKSEKTGGIVHSLLNKTKSAEVKEKLQQFSMQLMHLKINFTAAGLFNIDR) are cytoplasmic. A helical membrane pass occupies residues 424–444 (TLYFTISGALTTYLIILLQFT). The Extracellular portion of the chain corresponds to 445–470 (SNSPNNGYGNGSSCCETFNNMTNHTL). Residues Asn454, Asn464, and Asn467 are each glycosylated (N-linked (GlcNAc...) asparagine).

Belongs to the insect chemoreceptor superfamily. Gustatory receptor (GR) family. Gr66a subfamily. As to expression, isoforms A and E have taste neuron-specific expression restricted to the labial palps, the internal taste organs in the pharynx, and the legs. In addition to expression in a large number of taste neurons, isoform A is also expressed in a few nonchemosensory neurons, including the campaniform sensilla of the wing, leg stretch receptors, and multiple dendritic neurons in the abdomen. Isoform B is the only receptor not expressed in gustatory receptor neurons in the labellum. We observe expression of this receptor in a single large cell at the base of each maxillary palp, in campaniform sensilla of the wing, and multiple dendritic neurons in the abdomen. Isoform C is expressed by many gustatory receptor neurons in the labial palps, the pharyngeal taste clusters, and taste neurons in the legs. In addition, isoform C expressed in a single cell at the base of the maxillary palps, neurons in the Johnston's organ (JO), campaniform sensilla of the wing, stretch receptors and the femoral chordotonal organ of the legs, and multiple dendritic neurons in the abdomen. Isoform D is expressed in a small number of gustatory receptor neurons in the labial palps, the ventral cibarial sense organ (VCSO), and legs. Atypical expression is observed in three neurons in the arista, campaniform sensilla of the wing, stretch and femoral chordotonal organ receptors in the legs, and multiple dendritic neurons in the abdomen. In larvae, Isoform A is expressed in neurons of the terminal external chemosensory organ and the dorsal external chemosensory organ; and isoform E is expressed in neurons of the terminal external chemosensory organ.

The protein localises to the cell membrane. Probable gustatory receptor which mediates acceptance or avoidance behavior, depending on its substrates. Atypical expression also suggests nongustatory roles in the nervous system and tissues involved in proprioception, hygroreception, and other sensory modalities. It is also possible that it has chemosensory roles in the detection of internal ligands. This chain is Putative gustatory receptor 28b (Gr28b), found in Drosophila melanogaster (Fruit fly).